Consider the following 116-residue polypeptide: Large ribosomal subunit protein uL18 (116 aa).

The protein belongs to the universal ribosomal protein uL18 family. As to quaternary structure, part of the 50S ribosomal subunit; part of the 5S rRNA/L5/L18/L25 subcomplex. Contacts the 5S and 23S rRNAs.

Its function is as follows. This is one of the proteins that bind and probably mediate the attachment of the 5S RNA into the large ribosomal subunit, where it forms part of the central protuberance. The sequence is that of Large ribosomal subunit protein uL18 from Mycoplasma capricolum subsp. capricolum (strain California kid / ATCC 27343 / NCTC 10154).